The primary structure comprises 518 residues: Membrane-bound lytic murein transglycosylase F (518 aa).

An N-terminal signal peptide occupies residues 1 to 21 (MKKLKINYLFIGILALLLAVA). The non-LT domain stretch occupies residues 22 to 269 (LWPSIPWFGK…RIEEKYLGHG (248 aa)). Positions 270 to 518 (DDFDYVDTRT…SRKGSEEKQN (249 aa)) are LT domain. Glutamate 314 is a catalytic residue.

The protein in the N-terminal section; belongs to the bacterial solute-binding protein 3 family. It in the C-terminal section; belongs to the transglycosylase Slt family.

It is found in the cell outer membrane. The catalysed reaction is Exolytic cleavage of the (1-&gt;4)-beta-glycosidic linkage between N-acetylmuramic acid (MurNAc) and N-acetylglucosamine (GlcNAc) residues in peptidoglycan, from either the reducing or the non-reducing ends of the peptidoglycan chains, with concomitant formation of a 1,6-anhydrobond in the MurNAc residue.. In terms of biological role, murein-degrading enzyme that degrades murein glycan strands and insoluble, high-molecular weight murein sacculi, with the concomitant formation of a 1,6-anhydromuramoyl product. Lytic transglycosylases (LTs) play an integral role in the metabolism of the peptidoglycan (PG) sacculus. Their lytic action creates space within the PG sacculus to allow for its expansion as well as for the insertion of various structures such as secretion systems and flagella. The polypeptide is Membrane-bound lytic murein transglycosylase F (Escherichia coli (strain SMS-3-5 / SECEC)).